We begin with the raw amino-acid sequence, 359 residues long: uncharacterized protein (359 aa).

Belongs to the glycosyltransferase group 1 family. Glycosyltransferase 4 subfamily.

This is an uncharacterized protein from Bacillus subtilis (strain 168).